Reading from the N-terminus, the 75-residue chain is Exodeoxyribonuclease 7 small subunit (75 aa).

Belongs to the XseB family. As to quaternary structure, heterooligomer composed of large and small subunits.

The protein localises to the cytoplasm. The catalysed reaction is Exonucleolytic cleavage in either 5'- to 3'- or 3'- to 5'-direction to yield nucleoside 5'-phosphates.. In terms of biological role, bidirectionally degrades single-stranded DNA into large acid-insoluble oligonucleotides, which are then degraded further into small acid-soluble oligonucleotides. This Anaplasma phagocytophilum (strain HZ) protein is Exodeoxyribonuclease 7 small subunit.